Consider the following 211-residue polypeptide: Large ribosomal subunit protein eL13 (211 aa).

An N6-acetyllysine modification is found at Lys16. 2 positions are modified to phosphoserine: Ser77 and Ser106. Residues Lys123 and Lys145 each participate in a glycyl lysine isopeptide (Lys-Gly) (interchain with G-Cter in SUMO2) cross-link. A Glycyl lysine isopeptide (Lys-Gly) (interchain with G-Cter in SUMO1); alternate cross-link involves residue Lys174. Residues Lys174 and Lys177 each participate in a glycyl lysine isopeptide (Lys-Gly) (interchain with G-Cter in SUMO2); alternate cross-link. N6-acetyllysine; alternate is present on Lys177.

It belongs to the eukaryotic ribosomal protein eL13 family. In terms of assembly, component of the 60S large ribosomal subunit (LSU).

It localises to the cytoplasm. Functionally, component of the ribosome, a large ribonucleoprotein complex responsible for the synthesis of proteins in the cell. The small ribosomal subunit (SSU) binds messenger RNAs (mRNAs) and translates the encoded message by selecting cognate aminoacyl-transfer RNA (tRNA) molecules. The large subunit (LSU) contains the ribosomal catalytic site termed the peptidyl transferase center (PTC), which catalyzes the formation of peptide bonds, thereby polymerizing the amino acids delivered by tRNAs into a polypeptide chain. The nascent polypeptides leave the ribosome through a tunnel in the LSU and interact with protein factors that function in enzymatic processing, targeting, and the membrane insertion of nascent chains at the exit of the ribosomal tunnel. As part of the LSU, it is probably required for its formation and the maturation of rRNAs. Plays a role in bone development. The chain is Large ribosomal subunit protein eL13 (RPL13) from Oryctolagus cuniculus (Rabbit).